The sequence spans 177 residues: Immunity protein CdiI-YPIII (177 aa).

Interacts with the C-terminal DNase fragment (residues 954-1077) of cognate toxin CdiA-YPIII.

Its function is as follows. Immunity protein component of a toxin-immunity protein module, which functions as a cellular contact-dependent growth inhibition (CDI) system. CDI modules allow bacteria to communicate with and inhibit the growth of closely related neighboring bacteria in a contact-dependent fashion. Neutralizes the toxic activity of cognate toxin CdiA-YPIII (residues 954-1077). Does not inhibit toxic activity of CdiA from other toxin-immunity modules. This chain is Immunity protein CdiI-YPIII, found in Yersinia pseudotuberculosis serotype O:3 (strain YPIII).